Consider the following 367-residue polypeptide: CCN family member 4 (367 aa).

The signal sequence occupies residues 1–22 (MRWLLPWTLAAVAVLRVGNILA). Residues 45–118 (RPEFCKWPCE…RYAIGVCAQV (74 aa)) enclose the IGFBP N-terminal domain. 4 cysteine pairs are disulfide-bonded: Cys49-Cys73, Cys53-Cys75, Cys55-Cys76, and Cys62-Cys79. Asn86 carries an N-linked (GlcNAc...) asparagine glycan. Intrachain disulfides connect Cys87–Cys101 and Cys93–Cys115. The VWFC domain occupies 121 to 186 (VGCVLDGVRY…GQCCEQWVCD (66 aa)). The N-linked (GlcNAc...) asparagine glycan is linked to Asn143. The TSP type-1 domain maps to 215 to 260 (NCIAYTSPWSPCSTTCGLGISTRISNVNARCWPEQESRLCNLRPCD). Cystine bridges form between Cys273-Cys310, Cys290-Cys324, Cys301-Cys340, Cys304-Cys342, and Cys309-Cys346. In terms of domain architecture, CTCK spans 273 to 347 (CLAVYQPEEA…NACFCNLSCR (75 aa)). An N-linked (GlcNAc...) asparagine glycan is attached at Asn284. Asn343 carries N-linked (GlcNAc...) asparagine glycosylation.

The protein belongs to the CCN family. In terms of tissue distribution, highly expressed in kidney and lung. Lower levels in heart, brain, spleen, liver, skeletal muscle and testis. Expressed in low metastatic melanoma cells.

It is found in the secreted. Functionally, downstream regulator in the Wnt/Frizzled-signaling pathway. Associated with cell survival. Adheres to skin and melanoma fibroblasts. In vitro binding to skin fibroblasts occurs through the proteoglycans, decorin and biglycan. Suppresses tumor growth in vivo. The protein is CCN family member 4 (Ccn4) of Mus musculus (Mouse).